Reading from the N-terminus, the 415-residue chain is Glutamyl-tRNA reductase (415 aa).

Substrate is bound by residues 49–52, S104, 109–111, and Q115; these read TCNR and EPQ. C50 serves as the catalytic Nucleophile. 184–189 contributes to the NADP(+) binding site; sequence GAGEMI.

Belongs to the glutamyl-tRNA reductase family. Homodimer.

It catalyses the reaction (S)-4-amino-5-oxopentanoate + tRNA(Glu) + NADP(+) = L-glutamyl-tRNA(Glu) + NADPH + H(+). It participates in porphyrin-containing compound metabolism; protoporphyrin-IX biosynthesis; 5-aminolevulinate from L-glutamyl-tRNA(Glu): step 1/2. Catalyzes the NADPH-dependent reduction of glutamyl-tRNA(Glu) to glutamate 1-semialdehyde (GSA). This Neisseria meningitidis serogroup C (strain 053442) protein is Glutamyl-tRNA reductase.